The primary structure comprises 357 residues: Popeye domain-containing protein 1 (357 aa).

Residues 1–38 (MDTTAISPLTPLGVIPDLKNATSVPFNETACENWKEIH) lie on the Extracellular side of the membrane. N-linked (GlcNAc...) asparagine glycans are attached at residues asparagine 20 and asparagine 27. A helical transmembrane segment spans residues 39 to 59 (HLVFHVANICFAAGLVIPTTL). The Cytoplasmic segment spans residues 60–62 (NLH). Residues 63-83 (MIFLRGLLTVGCALFIIWATL) traverse the membrane as a helical segment. The Extracellular portion of the chain corresponds to 84-89 (YRCALD). The chain crosses the membrane as a helical span at residues 90–110 (IMIWNSVFLVVNLLHFIYLVY). The Cytoplasmic portion of the chain corresponds to 111–357 (KRRPIKIEKE…AEKLELQRLP (247 aa)). Residues 309–323 (GTSSSSSLRPGRTSP) are compositionally biased toward low complexity. Residues 309-357 (GTSSSSSLRPGRTSPYLRTSAKMKPIEESVEDDVFEAPSAEKLELQRLP) form a disordered region. Residues 347–357 (SAEKLELQRLP) are compositionally biased toward basic and acidic residues.

This sequence belongs to the popeye family. In terms of assembly, homodimer. Homodimerization requires the C-terminus cytoplasmic region. Expressed in the heart and skeletal muscle (at protein level). Isoform 1 and isoform 4: expressed in heart, muscle, brain, stomach, kidney, lung and spleen.

It is found in the lateral cell membrane. Its subcellular location is the cell junction. It localises to the tight junction. The protein localises to the membrane. The protein resides in the cell membrane. It is found in the sarcolemma. Its subcellular location is the caveola. In terms of biological role, cell adhesion molecule involved in the establishment and/or maintenance of cell integrity. Involved in the formation and regulation of the tight junction (TJ) paracellular permeability barrier in epithelial cells. Induces primordial adhesive contact and aggregation of epithelial cells in a Ca(2+)-independent manner. Involved in epithelial movement during corneal sheet formation and regeneration. May play a role in VAMP3-mediated vesicular transport and recycling of receptor molecules. May play a role in the regulation of cell shape and movement by modulating the Rho-GTPase activity. May be involved in skeletal muscle and heart development as well as in the maintenance of heart function. May also be involved in striated muscle regeneration and in the regulation of cell spreading. This chain is Popeye domain-containing protein 1 (POPDC1), found in Gallus gallus (Chicken).